The chain runs to 333 residues: NADH dehydrogenase (ubiquinone) complex I, assembly factor 6 (333 aa).

Residues 1–44 (MAASAHGSVWGPLRLGIPGLCCRRPPLGLYARMRRLPGPEVSGR) constitute a mitochondrion transit peptide.

The protein belongs to the NDUFAF6 family. Widely expressed. A lower expression is observed in lung and kidney compared to heart, muscle and liver. In the kidney, expression is high in the basal zone of the proximal tubular cells.

It is found in the mitochondrion inner membrane. It localises to the cytoplasm. Its subcellular location is the nucleus. Its function is as follows. Involved in the assembly of mitochondrial NADH:ubiquinone oxidoreductase complex (complex I) at early stages. May play a role in the biogenesis of complex I subunit MT-ND1. The polypeptide is NADH dehydrogenase (ubiquinone) complex I, assembly factor 6 (NDUFAF6) (Homo sapiens (Human)).